The following is a 454-amino-acid chain: tRNA modification GTPase MnmE (454 aa).

The (6S)-5-formyl-5,6,7,8-tetrahydrofolate site is built by Arg23, Glu80, and Lys120. In terms of domain architecture, TrmE-type G spans 216 to 377 (GMKVVIAGRP…LRNHLKQSMG (162 aa)). Asn226 provides a ligand contact to K(+). Residues 226–231 (NAGKSS), 245–251 (TDIAGTT), 270–273 (DTAG), 335–338 (NKAD), and 358–360 (SAR) contribute to the GTP site. Ser230 serves as a coordination point for Mg(2+). The K(+) site is built by Thr245, Ile247, and Thr250. Residue Thr251 participates in Mg(2+) binding. Lys454 lines the (6S)-5-formyl-5,6,7,8-tetrahydrofolate pocket.

Belongs to the TRAFAC class TrmE-Era-EngA-EngB-Septin-like GTPase superfamily. TrmE GTPase family. As to quaternary structure, homodimer. Heterotetramer of two MnmE and two MnmG subunits. K(+) serves as cofactor.

The protein resides in the cytoplasm. Its function is as follows. Exhibits a very high intrinsic GTPase hydrolysis rate. Involved in the addition of a carboxymethylaminomethyl (cmnm) group at the wobble position (U34) of certain tRNAs, forming tRNA-cmnm(5)s(2)U34. The protein is tRNA modification GTPase MnmE of Escherichia coli (strain 55989 / EAEC).